Consider the following 152-residue polypeptide: Methylglyoxal synthase (152 aa).

Positions arginine 6–lysine 152 constitute an MGS-like domain. Residues histidine 19, lysine 23, threonine 45–threonine 48, and serine 65–glycine 66 contribute to the substrate site. The active-site Proton donor/acceptor is the aspartate 71. Histidine 98 contributes to the substrate binding site.

Belongs to the methylglyoxal synthase family.

The catalysed reaction is dihydroxyacetone phosphate = methylglyoxal + phosphate. Functionally, catalyzes the formation of methylglyoxal from dihydroxyacetone phosphate. This Proteus mirabilis (strain HI4320) protein is Methylglyoxal synthase.